We begin with the raw amino-acid sequence, 334 residues long: Thiamine-binding periplasmic protein (334 aa).

The first 23 residues, 1–23 (MRLLSLLTFSLFAVIGLAPAAQA), serve as a signal peptide directing secretion. Residues 64 to 65 (DG), 166 to 167 (AT), Trp-202, and 220 to 223 (YTTS) each bind thiamine.

This sequence belongs to the bacterial solute-binding protein 1 family. In terms of assembly, the complex is composed of two ATP-binding proteins (ThiQ), two transmembrane proteins (ThiP) and a solute-binding protein (ThiB).

Its subcellular location is the periplasm. In terms of biological role, part of the ABC transporter complex ThiBPQ involved in thiamine import. In Brucella abortus biovar 1 (strain 9-941), this protein is Thiamine-binding periplasmic protein (thiB).